Reading from the N-terminus, the 429-residue chain is FAD-dependent monooxygenase azaH (429 aa).

Residues 5–25 (SIEVAIIGAGITGITLALGLL) form a helical membrane-spanning segment. 2 residues coordinate FAD: E35 and G48. 2 N-linked (GlcNAc...) asparagine glycosylation sites follow: N75 and N87. R116 serves as a coordination point for FAD. R199 is an active-site residue. D315 and A328 together coordinate FAD.

This sequence belongs to the paxM FAD-dependent monooxygenase family. FAD serves as cofactor.

It localises to the membrane. The protein operates within secondary metabolite biosynthesis. Its function is as follows. FAD-dependent monooxygenase; part of the gene cluster that mediates the biosynthesis of azaphilones, a class of fungal metabolites characterized by a highly oxygenated pyrano-quinone bicyclic core and exhibiting a broad range of bioactivities. In the first step, the non-reducing polyketide synthase azaA forms the hexaketide precursor from successive condensations of five malonyl-CoA units, presumably with a simple acetyl-CoA starter unit. The reactive polyketide chain then undergoes a PT-mediated C2-C7 cyclization to afford the aromatic ring and is eventually released as an aldehyde through the R-domain. The putative ketoreductase azaE is proposed to catalyze the reduction of the terminal ketone resulting in the early culture product FK17-P2a. The monooxygenase azaH was demonstrated to be the only enzyme required to convert FK17-P2a to azanigerone E. AzaH first hydroxylates the benzaldehyde intermediate FK17-P2a at C4, which triggers the formation of the pyran-ring to afford azanigerone E. In parallel, the 2,4-dimethylhexanoyl chain is synthesized by the HR-PKS azaB and is proposed to be transferred to the C4-hydroxyl of azanigerone E by the acyltransferase azaD directly from the ACP domain of azaB. Alternatively, the 2,4-dimethyl-hexanoyl chain may be offloaded from the HR-PKS as a carboxylic acid and converted to an acyl-CoA by azaF. The resulting acyl-CoA molecule could then be taken up as a substrate by AzaD to form azanigerone B. To yield the carboxylic acid substituent in azanigerone A, the hydroxypropyl side chain of azanigerone B would need to undergo a C-C oxidative cleavage catalyzed by cytochrome P450 AzaI. AzaI is proposed to act on a vicinal diol that leads to a C-C bond scission either through an alkoxyradical intermediate or a peroxy complex. In the biosynthesis of azanigerone A, azanigerone B first undergoes hydroxylation at C10, possibly catalyzed by one of the two FAD-dependent monooxygenases encoded in the cluster, azaG or azaL, resulting in the vicinal diol azanigerone C. Oxidative cleavage of azanigerone C by azaI would yield the corresponding aldehyde derivative of azanigerone A. Finally, the dehydrogenase azaJ is proposed to convert the aldehyde functional group into the carboxylic acid, completing the conversion from azanigerone B to azanigerone A. Alternatively, the oxidation of aldehyde to carboxylic acid may be catalyzed by the same P450 enzyme azaI via consecutive oxidation or by endogenous alcohol dehydrogenase. This chain is FAD-dependent monooxygenase azaH, found in Aspergillus niger (strain ATCC 1015 / CBS 113.46 / FGSC A1144 / LSHB Ac4 / NCTC 3858a / NRRL 328 / USDA 3528.7).